Here is a 182-residue protein sequence, read N- to C-terminus: Isopentenyl-diphosphate Delta-isomerase (182 aa).

2 residues coordinate Mn(2+): H25 and H32. A Nudix hydrolase domain is found at 30–164 (RLHLAFSSWL…PWAFSPWMVM (135 aa)). The active site involves C67. H69 is a binding site for Mn(2+). A Mg(2+)-binding site is contributed by E87. Positions 114 and 116 each coordinate Mn(2+). Residue E116 is part of the active site.

Belongs to the IPP isomerase type 1 family. As to quaternary structure, homodimer. It depends on Mg(2+) as a cofactor. The cofactor is Mn(2+).

The protein resides in the cytoplasm. The catalysed reaction is isopentenyl diphosphate = dimethylallyl diphosphate. Its pathway is isoprenoid biosynthesis; dimethylallyl diphosphate biosynthesis; dimethylallyl diphosphate from isopentenyl diphosphate: step 1/1. Catalyzes the 1,3-allylic rearrangement of the homoallylic substrate isopentenyl (IPP) to its highly electrophilic allylic isomer, dimethylallyl diphosphate (DMAPP). This is Isopentenyl-diphosphate Delta-isomerase from Escherichia coli O139:H28 (strain E24377A / ETEC).